Reading from the N-terminus, the 189-residue chain is Notch ligand osm-11 (189 aa).

The signal sequence occupies residues 1 to 18 (MNFITVAALAIVMVLAQA).

In terms of assembly, may interact with lin-12/Notch receptor. Expressed in coelomocytes (at protein level).

The protein localises to the apical cell membrane. Its function is as follows. Probable secreted lin-12/Notch ligand or co-ligand involved in the mediation of Notch signaling. Involved in the lin-12/Notch pathway signaling of cell fate in vulval precursor cells (VPCs), acting redundantly with dsl-1 and lag-2. Required for normal octanol avoidance response, acting via both lin-12/Notch and glp-1/Notch signaling pathways in neurons, in concert with lag-2. Involved in regulation of sleep-like quiescence during the larval to adult transition, acting via Notch receptor activation and in parallel with EGF signaling. This chain is Notch ligand osm-11, found in Caenorhabditis elegans.